An 89-amino-acid polypeptide reads, in one-letter code: Small ribosomal subunit protein uS15 (89 aa).

A compositionally biased stretch (basic and acidic residues) spans 1-21 (MSIAAERKAEVIKTNARKDGD). The segment at 1–24 (MSIAAERKAEVIKTNARKDGDTGS) is disordered.

It belongs to the universal ribosomal protein uS15 family. As to quaternary structure, part of the 30S ribosomal subunit. Forms a bridge to the 50S subunit in the 70S ribosome, contacting the 23S rRNA.

Its function is as follows. One of the primary rRNA binding proteins, it binds directly to 16S rRNA where it helps nucleate assembly of the platform of the 30S subunit by binding and bridging several RNA helices of the 16S rRNA. In terms of biological role, forms an intersubunit bridge (bridge B4) with the 23S rRNA of the 50S subunit in the ribosome. The sequence is that of Small ribosomal subunit protein uS15 from Rhodopseudomonas palustris (strain BisA53).